A 219-amino-acid chain; its full sequence is MMTHDVGVRELGLIEYRAAWQAMQHFTNTRDADSGDEIWLLQHPPVFTQGQAGKAEHLLFPGEIPVVQVDRGGQVTYHGPGQLVGYLLLDVRRLGIGVRELVSRIERSLIDLLAGYDVEAVAKPDAPGVYVGGAKIASLGLRIRNGRSFHGLALNVDMDLEPFRRINPCGYAGLPMTQLRDLIGPIDISEVADRLRDHLVRQLGYAQQKTLAGGIEAYE.

The 176-residue stretch at 32–207 (ADSGDEIWLL…HLVRQLGYAQ (176 aa)) folds into the BPL/LPL catalytic domain. Substrate-binding positions include 71–78 (RGGQVTYH), 138–140 (SLG), and 151–153 (GLA). The active-site Acyl-thioester intermediate is Cys-169.

It belongs to the LipB family.

The protein resides in the cytoplasm. The catalysed reaction is octanoyl-[ACP] + L-lysyl-[protein] = N(6)-octanoyl-L-lysyl-[protein] + holo-[ACP] + H(+). It participates in protein modification; protein lipoylation via endogenous pathway; protein N(6)-(lipoyl)lysine from octanoyl-[acyl-carrier-protein]: step 1/2. Catalyzes the transfer of endogenously produced octanoic acid from octanoyl-acyl-carrier-protein onto the lipoyl domains of lipoate-dependent enzymes. Lipoyl-ACP can also act as a substrate although octanoyl-ACP is likely to be the physiological substrate. This Stutzerimonas stutzeri (strain A1501) (Pseudomonas stutzeri) protein is Octanoyltransferase.